We begin with the raw amino-acid sequence, 181 residues long: Peptide deformylase (181 aa).

The Fe cation site is built by Cys-103 and His-145. Glu-146 is an active-site residue. A Fe cation-binding site is contributed by His-149.

This sequence belongs to the polypeptide deformylase family. Requires Fe(2+) as cofactor.

It carries out the reaction N-terminal N-formyl-L-methionyl-[peptide] + H2O = N-terminal L-methionyl-[peptide] + formate. Removes the formyl group from the N-terminal Met of newly synthesized proteins. Requires at least a dipeptide for an efficient rate of reaction. N-terminal L-methionine is a prerequisite for activity but the enzyme has broad specificity at other positions. The chain is Peptide deformylase from Orientia tsutsugamushi (strain Ikeda) (Rickettsia tsutsugamushi).